The sequence spans 144 residues: Cytochrome c-type biogenesis protein CcmE (144 aa).

The Cytoplasmic portion of the chain corresponds to methionine 1–arginine 7. A helical; Signal-anchor for type II membrane protein membrane pass occupies residues alanine 8 to alanine 28. The Periplasmic segment spans residues leucine 29–lysine 144. Heme-binding residues include histidine 121 and tyrosine 125.

Belongs to the CcmE/CycJ family.

It localises to the cell inner membrane. Functionally, heme chaperone required for the biogenesis of c-type cytochromes. Transiently binds heme delivered by CcmC and transfers the heme to apo-cytochromes in a process facilitated by CcmF and CcmH. This chain is Cytochrome c-type biogenesis protein CcmE, found in Polynucleobacter necessarius subsp. necessarius (strain STIR1).